The primary structure comprises 248 residues: Small ribosomal subunit protein eS6 (248 aa).

Positions 213 to 248 are disordered; the sequence is LLAQRKKESKAKREEAKRRRSASMRESKSSISSDKK. Residues 223 to 248 are compositionally biased toward basic and acidic residues; that stretch reads AKREEAKRRRSASMRESKSSISSDKK.

The protein belongs to the eukaryotic ribosomal protein eS6 family. In terms of assembly, component of the small ribosomal subunit. Part of the small subunit (SSU) processome, composed of more than 70 proteins and the RNA chaperone small nucleolar RNA (snoRNA) U3. Post-translationally, ribosomal protein S6 is the major substrate of protein kinases in eukaryote ribosomes.

The protein resides in the cytoplasm. Its subcellular location is the nucleus. It is found in the nucleolus. Component of the 40S small ribosomal subunit. Plays an important role in controlling cell growth and proliferation through the selective translation of particular classes of mRNA. Part of the small subunit (SSU) processome, first precursor of the small eukaryotic ribosomal subunit. During the assembly of the SSU processome in the nucleolus, many ribosome biogenesis factors, an RNA chaperone and ribosomal proteins associate with the nascent pre-rRNA and work in concert to generate RNA folding, modifications, rearrangements and cleavage as well as targeted degradation of pre-ribosomal RNA by the RNA exosome. This Glossina morsitans morsitans (Savannah tsetse fly) protein is Small ribosomal subunit protein eS6 (RpS6).